A 474-amino-acid chain; its full sequence is tRNA-2-methylthio-N(6)-dimethylallyladenosine synthase (474 aa).

Positions 3–120 (KKLLIKTWGC…LPEMIRQSQS (118 aa)) constitute an MTTase N-terminal domain. [4Fe-4S] cluster-binding residues include Cys12, Cys49, Cys83, Cys157, Cys161, and Cys164. The 233-residue stretch at 143–375 (KAEGATAFVS…QQQVNSQAMR (233 aa)) folds into the Radical SAM core domain. Residues 378 to 441 (RLMLDTEQRV…ANSLRGELVR (64 aa)) enclose the TRAM domain.

This sequence belongs to the methylthiotransferase family. MiaB subfamily. In terms of assembly, monomer. [4Fe-4S] cluster serves as cofactor.

Its subcellular location is the cytoplasm. It catalyses the reaction N(6)-dimethylallyladenosine(37) in tRNA + (sulfur carrier)-SH + AH2 + 2 S-adenosyl-L-methionine = 2-methylsulfanyl-N(6)-dimethylallyladenosine(37) in tRNA + (sulfur carrier)-H + 5'-deoxyadenosine + L-methionine + A + S-adenosyl-L-homocysteine + 2 H(+). Catalyzes the methylthiolation of N6-(dimethylallyl)adenosine (i(6)A), leading to the formation of 2-methylthio-N6-(dimethylallyl)adenosine (ms(2)i(6)A) at position 37 in tRNAs that read codons beginning with uridine. The chain is tRNA-2-methylthio-N(6)-dimethylallyladenosine synthase from Aliivibrio fischeri (strain ATCC 700601 / ES114) (Vibrio fischeri).